The primary structure comprises 260 residues: Dynein regulatory complex subunit 6 (260 aa).

The span at 1 to 13 shows a compositional bias: basic residues; the sequence is MAPKKKGGGKKKK. The interval 1 to 43 is disordered; it reads MAPKKKGGGKKKKKDDGAEPPHDGSWERAVESGTWEKPVTDLP. The span at 14–30 shows a compositional bias: basic and acidic residues; it reads KDDGAEPPHDGSWERAV.

It belongs to the DRC6 family. Component of the nexin-dynein regulatory complex (N-DRC).

The protein localises to the cytoplasm. The protein resides in the cytoskeleton. It localises to the flagellum axoneme. Component of the nexin-dynein regulatory complex (N-DRC), a key regulator of ciliary/flagellar motility which maintains the alignment and integrity of the distal axoneme and regulates microtubule sliding in motile axonemes. This is Dynein regulatory complex subunit 6 from Chlamydomonas reinhardtii (Chlamydomonas smithii).